Reading from the N-terminus, the 112-residue chain is 87 kDa annexin-binding protein (112 aa).

In terms of assembly, binds annexin.

In Physarum polycephalum (Slime mold), this protein is 87 kDa annexin-binding protein.